The chain runs to 700 residues: Methionine--tRNA ligase (700 aa).

The short motif at 14–24 (PYANGPVHLGH) is the 'HIGH' region element. The Zn(2+) site is built by C146, C149, C159, and C162. Positions 343–347 (KFSKS) match the 'KMSKS' region motif. K346 is a binding site for ATP. The tRNA-binding domain maps to 599 to 700 (EFEKIDLRVA…GDSIVGKPVK (102 aa)).

This sequence belongs to the class-I aminoacyl-tRNA synthetase family. MetG type 1 subfamily. Homodimer. It depends on Zn(2+) as a cofactor.

The protein localises to the cytoplasm. It catalyses the reaction tRNA(Met) + L-methionine + ATP = L-methionyl-tRNA(Met) + AMP + diphosphate. Functionally, is required not only for elongation of protein synthesis but also for the initiation of all mRNA translation through initiator tRNA(fMet) aminoacylation. This chain is Methionine--tRNA ligase, found in Chloroherpeton thalassium (strain ATCC 35110 / GB-78).